Consider the following 396-residue polypeptide: Ribosomal RNA large subunit methyltransferase I (396 aa).

A PUA domain is found at 2 to 79 (SVRLVLAKGR…QAESIDIAFF (78 aa)).

The protein belongs to the methyltransferase superfamily. RlmI family.

Its subcellular location is the cytoplasm. The enzyme catalyses cytidine(1962) in 23S rRNA + S-adenosyl-L-methionine = 5-methylcytidine(1962) in 23S rRNA + S-adenosyl-L-homocysteine + H(+). Its function is as follows. Specifically methylates the cytosine at position 1962 (m5C1962) of 23S rRNA. This Citrobacter koseri (strain ATCC BAA-895 / CDC 4225-83 / SGSC4696) protein is Ribosomal RNA large subunit methyltransferase I.